We begin with the raw amino-acid sequence, 163 residues long: Probable cobalt-precorrin-6B C(15)-methyltransferase (decarboxylating) (163 aa).

S-adenosyl-L-methionine is bound by residues threonine 6, 30 to 34, aspartate 51, and glycine 75; that span reads GCGSG.

This sequence belongs to the methyltransferase superfamily. Archaeal-type CbiT family.

The catalysed reaction is Co-precorrin-6B + S-adenosyl-L-methionine = Co-precorrin-7 + S-adenosyl-L-homocysteine + CO2. Its pathway is cofactor biosynthesis; adenosylcobalamin biosynthesis; cob(II)yrinate a,c-diamide from sirohydrochlorin (anaerobic route): step 8/10. In terms of biological role, catalyzes the methylation of C-15 in cobalt-precorrin-6B followed by the decarboxylation of C-12 to form cobalt-precorrin-7. This Archaeoglobus fulgidus (strain ATCC 49558 / DSM 4304 / JCM 9628 / NBRC 100126 / VC-16) protein is Probable cobalt-precorrin-6B C(15)-methyltransferase (decarboxylating).